Here is a 670-residue protein sequence, read N- to C-terminus: Zinc finger protein 526 (670 aa).

3 C2H2-type zinc fingers span residues 57 to 79 (FMCS…QEQH), 108 to 130 (FQCG…QDAH), and 140 to 163 (YQCW…KAQH). Disordered stretches follow at residues 168–196 (VAEP…KMEP) and 217–304 (GTHF…ATHP). Residues 171–189 (PPVPPPLPPPTPLPPPSPP) show a composition bias toward pro residues. A C2H2-type 4 zinc finger spans residues 197–219 (YECPECSTLCATPEEFLEHQGTH). The span at 217-231 (GTHFDSLEKEERNGL) shows a compositional bias: basic and acidic residues. Acidic residues predominate over residues 232–263 (EEEEEDDEEDEEDDEEMEDEEAMAEVGDDAVG). 9 consecutive C2H2-type zinc fingers follow at residues 305 to 327 (FHCS…GRAH), 332 to 354 (HECT…LRLH), 360 to 382 (YLCV…RRAH), 388 to 409 (HRCR…RRTH), 442 to 465 (LPCP…RAVH), 472 to 494 (HRCG…LRTH), 500 to 522 (FQCH…QLTH), 528 to 550 (YQCL…RRLH), and 573 to 595 (YYCG…QRVH). Positions 409 to 443 (HAGKSGAPPTGATAPPAPAEPTPPPPPPAPPAQLP) are disordered. Positions 423-442 (PPAPAEPTPPPPPPAPPAQL) are enriched in pro residues. A disordered region spans residues 601 to 621 (LTLQPPRSPSPAPPPPPEPQQ). The segment covering 606-619 (PRSPSPAPPPPPEP) has biased composition (pro residues).

This sequence belongs to the krueppel C2H2-type zinc-finger protein family. Widely expressed.

The protein resides in the nucleus. In terms of biological role, may be involved in transcriptional regulation. This Homo sapiens (Human) protein is Zinc finger protein 526 (ZNF526).